We begin with the raw amino-acid sequence, 200 residues long: Probable nicotinate-nucleotide adenylyltransferase (200 aa).

It belongs to the NadD family.

The enzyme catalyses nicotinate beta-D-ribonucleotide + ATP + H(+) = deamido-NAD(+) + diphosphate. It functions in the pathway cofactor biosynthesis; NAD(+) biosynthesis; deamido-NAD(+) from nicotinate D-ribonucleotide: step 1/1. Functionally, catalyzes the reversible adenylation of nicotinate mononucleotide (NaMN) to nicotinic acid adenine dinucleotide (NaAD). This is Probable nicotinate-nucleotide adenylyltransferase from Clavibacter michiganensis subsp. michiganensis (strain NCPPB 382).